Consider the following 555-residue polypeptide: MASRKDERAAKEERAQAAAELAAKELRDVNQDRERGIKVVEHKEEVSGGPGVIGSILKSVQGTLGQAKEVVVGKAHDTAEVSRENTDYAYDKGREGGDVAAQKAEEAKEKAKMAKDTTMGKAGEYKDYTAQKAEEAKEKAAQKAEETKEKAGEYKNYTAQKAGEAKDTTLGKAGEYKDYAAQKAAEAKDTTAQKAAEAKEKTGEYKDYAAQKAAEAKVLAAQKAAEAKDTTGKDGEYKDYAAQKAAEAKDATMQKTGEYKDYAAQKTAETKDATMEKAKEYKEYAAQKAAEAKDATMQKTGEYKDYSAQKAAETKDATMEKTKEYKDYTAQKAAETKDATMEKAKEAKDTTVQKTGEYKDYAAEKAKEGKDVTVEKAKEGKDTTVGKMTELKDSAADAARKAMDMFLGKKEEVKGKAGETAEAAKEKYEDTEFAARKKMEELKLQEEGVKDEAKQRAEADRETAGDRGSAAKGTIFGAMGSVKDAIVGKLTMPSDVVKDKQQQEAVIKVDETRPGAVAEALKAADQMHGQAFNDVGKMGDEEVIVERKETRQGKM.

A compositionally biased stretch (basic and acidic residues) spans 83 to 115; that stretch reads RENTDYAYDKGREGGDVAAQKAEEAKEKAKMAK. Disordered regions lie at residues 83–118 and 132–151; these read RENT…KDTT and KAEE…KEKA. 17 tandem repeats follow at residues 97–114, 115–125, 126–140, 141–154, 155–176, 177–191, 192–205, 206–216, 217–237, 238–259, 260–281, 282–303, 304–325, 326–343, 344–358, 359–376, and 377–391. A 17 X approximate tandem repeats region spans residues 97-391; it reads GDVAAQKAEE…DTTVGKMTEL (295 aa). The disordered stretch occupies residues 184 to 204; the sequence is AAEAKDTTAQKAAEAKEKTGE. A compositionally biased stretch (basic and acidic residues) spans 444–465; sequence LQEEGVKDEAKQRAEADRETAG. Residues 444-472 are disordered; that stretch reads LQEEGVKDEAKQRAEADRETAGDRGSAAK.

Belongs to the LEA type 4 family.

It is found in the cytoplasm. It localises to the secreted. The protein localises to the cell wall. Functionally, may play a role in late embryogeny. The chain is Embryonic protein DC-8 from Daucus carota (Wild carrot).